The primary structure comprises 679 residues: Glycine--tRNA ligase beta subunit (679 aa).

This sequence belongs to the class-II aminoacyl-tRNA synthetase family. Tetramer of two alpha and two beta subunits.

The protein resides in the cytoplasm. The enzyme catalyses tRNA(Gly) + glycine + ATP = glycyl-tRNA(Gly) + AMP + diphosphate. The chain is Glycine--tRNA ligase beta subunit from Streptococcus pyogenes serotype M28 (strain MGAS6180).